The primary structure comprises 4776 residues: Pneumococcal serine-rich repeat protein (4776 aa).

Residues 1–72 (MTETVEDKVS…VVLGTISTSN (72 aa)) form the signal peptide. Residues Ser73, Ser75, Ser76, Ser78, Ser80, Ser82, Ser94, Ser100, Ser108, Ser110, Ser118, Ser120, and Ser121 are each glycosylated (O-linked (GlcNAc...) serine). The tract at residues 73-121 (SASSTSLSASESASTSASESASTSASTSASTSASESASTSASTSISASS) is serine-rich repeat region 1, SRR1. Residues 86 to 112 (STSASESASTSASTSASTSASESASTS) form a disordered region. The self aggregating domain stretch occupies residues 122–166 (TVVGSQTAAATEATAKKVEEDRKKPASDYVASVTNVNLQSYAKRR). Residues 122 to 394 (TVVGSQTAAA…QSKSLSVSAS (273 aa)) form a basic region, BR region. Residues 164 to 168 (KRRKR) carry the Host furin cleavage recognition motif. The keratin 10-binding domain, cell-type specific binding to lung-derived cells stretch occupies residues 273-341 (TQTMLTLGSD…GYGLTSSWTV (69 aa)). A serine-rich repeat region 2, SRR2 region spans residues 395–4712 (QSASASASTS…ASTSASASAS (4318 aa)). Disordered regions lie at residues 481-627 (ASTS…STSA), 861-889 (ASASTSASESASTSASASASTSASESAST), 925-965 (ASAS…SASA), 1052-1085 (SASTSASESASTSASASASTSASESASTSASASA), 1123-1153 (ASASTSASESASTSTSASASTSASESASTSA), 1171-1199 (ASASTSASASASTSASASTSASESASTSA), 1311-1357 (ASES…SAST), 1671-1731 (ASES…SESA), 1792-1863 (SASE…STSA), 2105-2133 (ASASTSASESASTSASASASTSASESAST), 2169-2209 (ASAS…SASA), 2296-2329 (SASTSASESASTSASASASTSASESASTSASASA), 2367-2397 (ASASTSASESASTSTSASASTSASESASTSA), 2415-2443 (ASASTSASASASTSASASTSASESASTSA), 2571-2631 (ASES…SESA), 2737-2805 (ESAS…STSA), 2855-3113 (ASAS…STSA), 3347-3375 (ASASTSASESASTSASASASTSASESAST), 3411-3451 (ASAS…SASA), 3538-3571 (SASTSASESASTSASASASTSASESASTSASASA), 3609-3639 (ASASTSASESASTSTSASASTSASESASTSA), 3657-3685 (ASASTSASASASTSASASTSASESASTSA), 3797-3843 (ASES…SAST), 4167-4197 (ASASTSASESASTSTSASASTSASESASTSA), 4215-4243 (ASASTSASASASTSASASTSASESASTSA), 4355-4401 (ASES…SAST), and 4706-4747 (SASA…GTES). Residues 4715–4747 (VSNSANHSNSQVGNTSGSTGKSQKELPNTGTES) show a composition bias toward polar residues. An LPXTG sorting signal motif is present at residues 4740 to 4744 (LPNTG). Thr4743 is modified (pentaglycyl murein peptidoglycan amidated threonine). Positions 4744–4776 (GTESSIGSVLLGVLAAVTGIGLVAKRRKRDEEE) are cleaved as a propeptide — removed by sortase.

Belongs to the serine-rich repeat protein (SRRP) family. In terms of assembly, binds to human and mouse protein keratin 10 (KRT10). In terms of processing, glycosylated. Only truncated substrates greater than 25 residues long are glycosylated by the Gtf1-Gtf2 complex in vitro; only Ser residues have been seen to be glycosylated. Based on electrophoretic mobility it is probable that most of the Ser residues in SSR1 and SSR2 are O-GlcNAcylated. Subsequent glycosylation by up to 7 sugar transferases (Gtf3 and GlyAT, GlyB, GlyD, GlyE, GlyF and GlyG) is able to generate very high sugar polymorphism. Can be cleaved by human furin protease; this fragment contributes to self-aggregation and possibly biofilm formation in vitro.

The protein resides in the secreted. Its subcellular location is the cell wall. The protein localises to the cell surface. In terms of biological role, protein that allows bacteria to adhere to mammalian host cells. Required for full virulence in mouse infection models when infected intranasally. Required for adhesion to host cells in vitro and for persistence in the lower respiratory tract. Binds host keratin 10 (KRT10) on lung cells which mediates adhesion via the C-terminus of the basic region (BR, residues 273-341); glycosylation of either protein is not required for the interaction. A region in the N-terminus (residues 122-166) self aggregates, contributing to mature biofilm formation. The basic region (BR, residues 187-385) also self aggregates; the BR binds DNA which enhances self aggregation. This is Pneumococcal serine-rich repeat protein from Streptococcus pneumoniae serotype 4 (strain ATCC BAA-334 / TIGR4).